Reading from the N-terminus, the 658-residue chain is Non-reducing end beta-L-arabinofuranosidase (658 aa).

Beta-L-arabinofuranose contacts are provided by residues His-142, 192–194 (DGH), His-270, and Glu-322. Glu-322 functions as the Proton donor/acceptor in the catalytic mechanism. 4 residues coordinate Zn(2+): Glu-338, Cys-340, Cys-417, and Cys-418. Residue Cys-417 is the Nucleophile; S-glycosyl-cysteine intermediate of the active site.

Belongs to the glycosyl hydrolase 127 family. As to quaternary structure, homodimer in solution. Zn(2+) is required as a cofactor.

The enzyme catalyses beta-L-arabinofuranosyl-(1-&gt;2)-beta-L-arabinofuranose + H2O = 2 beta-L-arabinofuranose. Its activity is regulated as follows. Strongly inhibited in the presence of thiol modifiers, suggesting a crucial role for cysteine residues in catalysis. Slightly inhibited by EDTA. Its function is as follows. Beta-L-arabinofuranosidase that removes the beta-L-arabinofuranose residue from the non-reducing end of various substrates, including beta-L-arabinofuranosyl-hydroxyproline (Ara-Hyp), Ara-beta-1,2-Ara-beta-Hyp (Ara(2)-Hyp), Ara-beta-1,2-Ara-beta-1,2-Ara-beta-Hyp (Ara(3)-Hyp), and beta-L-arabinofuranosyl-(1-&gt;2)-1-O-methyl-beta-L-arabinofuranose. In the presence of 1-alkanols, shows transglycosylation activity, retaining the anomeric configuration of the arabinofuranose residue. The sequence is that of Non-reducing end beta-L-arabinofuranosidase from Bifidobacterium longum subsp. longum (strain ATCC 15707 / DSM 20219 / JCM 1217 / NCTC 11818 / E194b).